The following is a 586-amino-acid chain: Proton channel OTOP1 (586 aa).

Topologically, residues 1–52 (MVEHGGTDSMWLNKYNPAAASSASSSSSSDAENKLFSRLKVSLTKKYPQKNA) are cytoplasmic. The chain crosses the membrane as a helical span at residues 53–74 (ELLSAQYGTNLLLLGVSVMLAL). Residues 75–82 (AAQSGPVK) lie on the Extracellular side of the membrane. Residues 83–106 (EEHLLSFITVLMLVQLVWMLCYMI) traverse the membrane as a helical segment. Over 107–124 (RRERERSPVPERDAHAGA) the chain is Cytoplasmic. A helical membrane pass occupies residues 125-147 (SWIRGGLTMLALLSLIMDAFRIG). Residues 148–157 (YFVGYHSCIS) lie on the Extracellular side of the membrane. The helical transmembrane segment at 158–182 (AALGVYPIVHALHTISQVHFLWFHI) threads the bilayer. At 183 to 190 (KDVIKKYE) the chain is on the cytoplasmic side. The chain crosses the membrane as a helical span at residues 191-217 (TFERFGVIHAVFTNLLLWCNGVMSETE). Residues 218–255 (HFMHNHRRRLIEMGYANLSTVDVQPHCNCTTSVCSMFS) lie on the Extracellular side of the membrane. The chain crosses the membrane as a helical span at residues 256–281 (TSLYYLYPFNIEYHIFVSAMLFVMWK). At 282–303 (NIGRTLDRHSNRKRRSTGSTGL) the chain is on the cytoplasmic side. A helical membrane pass occupies residues 304–326 (LLGPLGGLVALASSVSVLVVYLI). Over 327-336 (HLEKTEEMHE) the chain is Extracellular. Residues 337–362 (AAVSMFYYYGVAMMACMCVGSGTGLL) form a helical membrane-spanning segment. Residues 363 to 380 (VYRMENRPMDTGSNPART) are Cytoplasmic-facing. Residues 381–405 (LDTELLLASSLGSWLMSWCSVVASV) form a helical membrane-spanning segment. The Extracellular portion of the chain corresponds to 406–417 (AEAGQKSPSFSW). The helical transmembrane segment at 418–438 (TSLTYSLLLVLEKCIQNLFIV) threads the bilayer. Over 439 to 518 (ESLYRRHSEE…TPGRKRQILK (80 aa)) the chain is Cytoplasmic. A disordered region spans residues 484-505 (PAAGSHALSRKQPDAPLPAGQR). Residues 519-537 (NICMFLFMCNISLWILPAF) form a helical membrane-spanning segment. Residues 538–555 (GCRPQYDNPLENETFGTS) lie on the Extracellular side of the membrane. Residues 556 to 579 (VWTTVLNVAIPLNLFYRMHSVASL) traverse the membrane as a helical segment. At 580–586 (FEVFRKV) the chain is on the cytoplasmic side.

This sequence belongs to the otopetrin family. Homodimer.

The protein localises to the cell membrane. Its subcellular location is the cell projection. It is found in the microvillus. It catalyses the reaction H(+)(in) = H(+)(out). Activated by both acid and alkali, with proton influx in response to extracellular acid and proton efflux during alkali stimulation. Inhibited by Zn(2+); this inhibition is thought to be pH-sensitive. Currents evoked in response to mild acid (pH 6.0) stimulus may also be mildly potentiated by exposure to Zn(2+). Activated by NH(4)Cl. Its function is as follows. Proton-selective ion channel. Biphasically modulated by acid and alkali, mediating proton influx and efflux in response to extracellular acid and base stimulation, respectively. May be involved in acid and base perception. Sensor for ammonium chloride (NH(4)Cl) in taste receptor cells. NH(4)Cl acts by increasing the intracellular pH, thereby generating a driving force for proton entry through OTOP1 channel. Plays a role in the regulation of Ca(2+) flux in response to purigenic (ATP, ADP and UDP) stimuli, leading to increase in cytosolic Ca(2+) due to influx of extracellular calcium. May play this role by inhibiting P2Y purinoceptor-mediated Ca(2+) release in a Ca(2+)-dependent manner and promote an influx of Ca(2+) in response to ATP. Through this mechanism and possibly others, plays a role in the formation and function of calcium carbonate-based structures in the vestibular system of the inner ear, called otoconia, that sense gravity and linear acceleration. In Danio rerio (Zebrafish), this protein is Proton channel OTOP1.